Reading from the N-terminus, the 457-residue chain is Bifunctional protein GlmU (457 aa).

The pyrophosphorylase stretch occupies residues 1-230 (MLNVVILAAG…SWETLGVNSR (230 aa)). Residues 7-10 (LAAG), lysine 21, glutamine 73, 78-79 (GT), 104-106 (YGD), glycine 140, glutamate 155, asparagine 170, and asparagine 228 contribute to the UDP-N-acetyl-alpha-D-glucosamine site. Residue aspartate 106 coordinates Mg(2+). Residue asparagine 228 coordinates Mg(2+). Positions 231-251 (VQQAQLERAWQSELARRQLEA) are linker. The N-acetyltransferase stretch occupies residues 252-457 (GVTLADPARF…EGWKRPVKKS (206 aa)). UDP-N-acetyl-alpha-D-glucosamine contacts are provided by arginine 334 and lysine 352. Residue histidine 364 is the Proton acceptor of the active site. UDP-N-acetyl-alpha-D-glucosamine contacts are provided by tyrosine 367 and asparagine 378. Acetyl-CoA-binding positions include alanine 381, 387–388 (NY), serine 406, alanine 424, and arginine 441.

The protein in the N-terminal section; belongs to the N-acetylglucosamine-1-phosphate uridyltransferase family. It in the C-terminal section; belongs to the transferase hexapeptide repeat family. In terms of assembly, homotrimer. Mg(2+) serves as cofactor.

The protein resides in the cytoplasm. It carries out the reaction alpha-D-glucosamine 1-phosphate + acetyl-CoA = N-acetyl-alpha-D-glucosamine 1-phosphate + CoA + H(+). It catalyses the reaction N-acetyl-alpha-D-glucosamine 1-phosphate + UTP + H(+) = UDP-N-acetyl-alpha-D-glucosamine + diphosphate. It participates in nucleotide-sugar biosynthesis; UDP-N-acetyl-alpha-D-glucosamine biosynthesis; N-acetyl-alpha-D-glucosamine 1-phosphate from alpha-D-glucosamine 6-phosphate (route II): step 2/2. It functions in the pathway nucleotide-sugar biosynthesis; UDP-N-acetyl-alpha-D-glucosamine biosynthesis; UDP-N-acetyl-alpha-D-glucosamine from N-acetyl-alpha-D-glucosamine 1-phosphate: step 1/1. Its pathway is bacterial outer membrane biogenesis; LPS lipid A biosynthesis. Its function is as follows. Catalyzes the last two sequential reactions in the de novo biosynthetic pathway for UDP-N-acetylglucosamine (UDP-GlcNAc). The C-terminal domain catalyzes the transfer of acetyl group from acetyl coenzyme A to glucosamine-1-phosphate (GlcN-1-P) to produce N-acetylglucosamine-1-phosphate (GlcNAc-1-P), which is converted into UDP-GlcNAc by the transfer of uridine 5-monophosphate (from uridine 5-triphosphate), a reaction catalyzed by the N-terminal domain. This Bordetella bronchiseptica (strain ATCC BAA-588 / NCTC 13252 / RB50) (Alcaligenes bronchisepticus) protein is Bifunctional protein GlmU.